Here is a 411-residue protein sequence, read N- to C-terminus: 2,3-bisphosphoglycerate-independent phosphoglycerate mutase (411 aa).

The protein belongs to the BPG-independent phosphoglycerate mutase family. A-PGAM subfamily.

It carries out the reaction (2R)-2-phosphoglycerate = (2R)-3-phosphoglycerate. It functions in the pathway carbohydrate degradation; glycolysis; pyruvate from D-glyceraldehyde 3-phosphate: step 3/5. Catalyzes the interconversion of 2-phosphoglycerate and 3-phosphoglycerate. The polypeptide is 2,3-bisphosphoglycerate-independent phosphoglycerate mutase (Thermococcus kodakarensis (strain ATCC BAA-918 / JCM 12380 / KOD1) (Pyrococcus kodakaraensis (strain KOD1))).